A 415-amino-acid chain; its full sequence is Multidrug resistance protein MdtA (415 aa).

A signal peptide spans Met-1–Ala-21. Disordered regions lie at residues Ser-32–Leu-59 and Glu-392–Ser-415. A compositionally biased stretch (basic and acidic residues) spans Ser-399–Ser-415.

The protein belongs to the membrane fusion protein (MFP) (TC 8.A.1) family. In terms of assembly, part of a tripartite efflux system composed of MdtA, MdtB and MdtC.

The protein localises to the cell inner membrane. The MdtABC tripartite complex confers resistance against novobiocin and deoxycholate. This Escherichia coli O17:K52:H18 (strain UMN026 / ExPEC) protein is Multidrug resistance protein MdtA.